Here is a 454-residue protein sequence, read N- to C-terminus: GA-binding protein alpha chain (454 aa).

The 84-residue stretch at 168–251 (AALEGYRKEQ…SHLELLRKYV (84 aa)) folds into the PNT domain. A disordered region spans residues 297–316 (QRAPRISGEDRSSPGNRTGN). Residue Ser303 is modified to Phosphoserine. The segment at residues 320–400 (IQLWQFLLEL…QGKRFVYKFV (81 aa)) is a DNA-binding region (ETS).

It belongs to the ETS family. As to quaternary structure, heterotetramer of two alpha and two beta subunits.

It is found in the nucleus. Transcription factor capable of interacting with purine rich repeats (GA repeats). Positively regulates transcription of transcriptional repressor RHIT/ZNF205. Functionally, (Microbial infection) Necessary for the expression of the Adenovirus E4 gene. The polypeptide is GA-binding protein alpha chain (GABPA) (Homo sapiens (Human)).